We begin with the raw amino-acid sequence, 556 residues long: Arginine--tRNA ligase (556 aa).

The short motif at 132-142 (ANPTGDLHLGH) is the 'HIGH' region element.

It belongs to the class-I aminoacyl-tRNA synthetase family. Monomer.

It localises to the cytoplasm. It carries out the reaction tRNA(Arg) + L-arginine + ATP = L-arginyl-tRNA(Arg) + AMP + diphosphate. This Bacillus velezensis (strain DSM 23117 / BGSC 10A6 / LMG 26770 / FZB42) (Bacillus amyloliquefaciens subsp. plantarum) protein is Arginine--tRNA ligase.